The following is a 424-amino-acid chain: Argininosuccinate synthase (424 aa).

Residues 9 to 17 (AYSGGLDTS) and Ala-35 contribute to the ATP site. L-citrulline-binding residues include Tyr-86 and Ser-91. Residue 114 to 122 (SHGATGKGN) participates in ATP binding. Thr-118, Asn-122, and Asp-123 together coordinate L-aspartate. Residue Asn-122 coordinates L-citrulline. Residues Arg-126, Ser-179, Ser-188, Glu-269, and Tyr-281 each coordinate L-citrulline.

This sequence belongs to the argininosuccinate synthase family. Homotetramer.

It catalyses the reaction L-citrulline + L-aspartate + ATP = 2-(N(omega)-L-arginino)succinate + AMP + diphosphate + H(+). Its pathway is amino-acid biosynthesis; L-arginine biosynthesis; L-arginine from L-ornithine and carbamoyl phosphate: step 2/3. It participates in nitrogen metabolism; urea cycle; (N(omega)-L-arginino)succinate from L-aspartate and L-citrulline: step 1/1. The polypeptide is Argininosuccinate synthase (Anopheles gambiae (African malaria mosquito)).